We begin with the raw amino-acid sequence, 321 residues long: MKRKKIALIGSGMIGGTLAHMIGLKELGDIVLFDVAEGLPQGKALDIAESSPVDGFDINLTGANAYEAIEGADVIIVTAGVARKPGMSRDDLLGINLKVMEQVGAGIKKYAPSAFVICITNPLDAMVWALQKFSGLPAQKVVGMAGVLDSARFRYFLSQEFNISIKDITAFVLGGHGDSMVPLVRYSTVSGIPLPDLVKMGWTTHEKIDQIVQRTRDGGAEIVSLLKTGSAFYAPASSAVAMAEAYLKDTRRVLPVAARLSGEYGIKDMYVGVPVVIGAGGVERVIEIDLNDNEKSAFEKSVNAVKELCKTCSALAPNLKE.

NAD(+) is bound by residues 10–15 and Asp-34; that span reads GSGMIG. Substrate-binding residues include Arg-83 and Arg-89. NAD(+)-binding positions include Asn-96 and 119-121; that span reads ITN. Positions 121 and 152 each coordinate substrate. His-176 acts as the Proton acceptor in catalysis.

Belongs to the LDH/MDH superfamily. MDH type 3 family.

The catalysed reaction is (S)-malate + NAD(+) = oxaloacetate + NADH + H(+). In terms of biological role, catalyzes the reversible oxidation of malate to oxaloacetate. The chain is Malate dehydrogenase from Bartonella bacilliformis (strain ATCC 35685 / KC583 / Herrer 020/F12,63).